Reading from the N-terminus, the 645-residue chain is DEAD-box ATP-dependent RNA helicase 46 (645 aa).

Disordered stretches follow at residues 1–22 and 44–137; these read MAAT…KPWK and YERP…AGNE. The WW domain occupies 15-49; the sequence is PNLPKPWKGLVDSRTGYLYFWNPETNVTQYERPAS. Positions 60-72 are enriched in low complexity; the sequence is VSSSVQTNQQSSS. A compositionally biased stretch (basic and acidic residues) spans 77–91; it reads GKEDDKYGRGSDGPK. The segment covering 108-136 has biased composition (low complexity); it reads SSNDAASGLGNASSGGSSARGPPSSAAGN. The short motif at 161–189 is the Q motif element; the sequence is MSFEATGLPNELLREVYSAGFSAPSPIQA. One can recognise a Helicase ATP-binding domain in the interval 192-366; it reads WPIAMQNRDI…ADLLVNPAQV (175 aa). 205–212 lines the ATP pocket; the sequence is AKTGSGKT. The DEAD box motif lies at 314–317; it reads DEAD. A Helicase C-terminal domain is found at 395–539; the sequence is RLEQILRSQE…KVPPQVREMA (145 aa). Positions 532–645 are disordered; sequence PPQVREMATR…FHEAMMMKNR (114 aa). The span at 556–597 shows a compositional bias: gly residues; the sequence is SSGGGGGRGGYGDSGYGGRGESGYGSRGDSGYGGRGDSGGRG. Over residues 598–608 the composition is skewed to low complexity; sequence SWAPSRDSSGS. Positions 612–623 are enriched in basic and acidic residues; it reads GRERSRSPERFR. The span at 624–634 shows a compositional bias: low complexity; that stretch reads GGPPSTSSPPR.

Belongs to the DEAD box helicase family. DDX5/DBP2 subfamily.

The enzyme catalyses ATP + H2O = ADP + phosphate + H(+). The polypeptide is DEAD-box ATP-dependent RNA helicase 46 (RH46) (Arabidopsis thaliana (Mouse-ear cress)).